We begin with the raw amino-acid sequence, 96 residues long: Small ribosomal subunit protein bS18 (96 aa).

Basic and acidic residues predominate over residues 1–22; sequence MYKDVDSHQRDSRSDGHQDGFK. Residues 1-25 are disordered; the sequence is MYKDVDSHQRDSRSDGHQDGFKKNP.

Belongs to the bacterial ribosomal protein bS18 family. Part of the 30S ribosomal subunit. Forms a tight heterodimer with protein bS6.

Binds as a heterodimer with protein bS6 to the central domain of the 16S rRNA, where it helps stabilize the platform of the 30S subunit. In Borrelia hermsii (strain HS1 / DAH), this protein is Small ribosomal subunit protein bS18.